A 585-amino-acid chain; its full sequence is Arginine--tRNA ligase (585 aa).

The 'HIGH' region signature appears at 126–136 (PNIAKEMHVGH).

The protein belongs to the class-I aminoacyl-tRNA synthetase family. As to quaternary structure, monomer.

The protein localises to the cytoplasm. It carries out the reaction tRNA(Arg) + L-arginine + ATP = L-arginyl-tRNA(Arg) + AMP + diphosphate. This Crocosphaera subtropica (strain ATCC 51142 / BH68) (Cyanothece sp. (strain ATCC 51142)) protein is Arginine--tRNA ligase.